A 528-amino-acid polypeptide reads, in one-letter code: Atypical kinase COQ8B, mitochondrial (528 aa).

The chain crosses the membrane as a helical span at residues 93–109 (LASFGGLAVGLGLGALA). Positions 151–154 (KIGQ) match the KxGQ motif motif. In terms of domain architecture, Protein kinase spans 187 to 419 (MMKVLEEELG…DRVLQKSQDL (233 aa)). Positions 212-215 (AAAS) match the AAAS motif motif. ATP contacts are provided by residues Ser-215, Lys-233, and 320 to 323 (MELA). Residue Asp-363 is the Proton acceptor of the active site. Asn-368 and Asp-382 together coordinate ATP.

Belongs to the protein kinase superfamily. ADCK protein kinase family. Homodimer; homodimerizes via its transmembrane region. Interacts with COQ6 and COQ7. Interacts with the multi-subunit COQ enzyme complex, composed of at least COQ3, COQ4, COQ5, COQ6, COQ7 and COQ9. As to expression, in the kidney, expressed in glomeruli, predominantly in podocyte foot precesses, as well as in proximal tubules and collecting ducts (at protein level).

It is found in the mitochondrion membrane. The protein localises to the cytoplasm. Its subcellular location is the cytosol. The protein resides in the cell membrane. Its pathway is cofactor biosynthesis; ubiquinone biosynthesis. Functionally, atypical kinase involved in the biosynthesis of coenzyme Q, also named ubiquinone, an essential lipid-soluble electron transporter for aerobic cellular respiration. Its substrate specificity is still unclear: may act as a protein kinase that mediates phosphorylation of COQ3. According to other reports, acts as a small molecule kinase, possibly a lipid kinase that phosphorylates a prenyl lipid in the ubiquinone biosynthesis pathway, as suggested by its ability to bind coenzyme Q lipid intermediates. However, the small molecule kinase activity was not confirmed by another publication. Required for podocyte migration. This chain is Atypical kinase COQ8B, mitochondrial, found in Rattus norvegicus (Rat).